The chain runs to 213 residues: MAATALFRSIRRRDVVSAPLSVYKSLAGNAQPSWGSSYIGQNYASFSRAFGSKPVVNDILGTGLGTNNAIREEREKSKSTEAAIVGAQLTRSFRALDVGTSKRLFSTISGDIKTTQEEPKIKSFRPLSPHLSVYQPQMNSMLSIFNRISGVYLTGVTFAGYLLYLKMGMICLTYPSFYQVLYHTQQQLPVITSVTALAAIYHTIKSTHSLLTH.

A mitochondrion-targeting transit peptide spans 1-105 (MAATALFRSI…LDVGTSKRLF (105 aa)). Residue His130 participates in heme binding. The helical transmembrane segment at 148–165 (ISGVYLTGVTFAGYLLYL) threads the bilayer.

In terms of assembly, component of complex II composed of eight subunits in plants: four classical SDH subunits SDH1, SDH2, SDH3 and SDH4 (a flavoprotein (FP), an iron-sulfur protein (IP), and a cytochrome b composed of a large and a small subunit.), as well as four subunits unknown in mitochondria from bacteria and heterotrophic eukaryotes. The cofactor is heme. As to expression, expressed in flowers, inflorescences and stems.

The protein localises to the mitochondrion inner membrane. The protein operates within carbohydrate metabolism; tricarboxylic acid cycle. Membrane-anchoring subunit of succinate dehydrogenase (SDH). This chain is Succinate dehydrogenase subunit 3-1, mitochondrial, found in Arabidopsis thaliana (Mouse-ear cress).